A 426-amino-acid chain; its full sequence is Adenylosuccinate synthetase (426 aa).

Residues Gly-12–Lys-18 and Gly-40–Thr-42 each bind GTP. Asp-13 functions as the Proton acceptor in the catalytic mechanism. The Mg(2+) site is built by Asp-13 and Gly-40. Residues Asp-13 to Lys-16, Asn-38 to His-41, Thr-130, Arg-144, Gln-224, Thr-239, and Arg-303 contribute to the IMP site. The active-site Proton donor is His-41. Thr-299–Arg-305 lines the substrate pocket. Residues Arg-305, Lys-331 to Asp-333, and Ser-413 to Gly-415 contribute to the GTP site.

Belongs to the adenylosuccinate synthetase family. Homodimer. Requires Mg(2+) as cofactor.

Its subcellular location is the cytoplasm. It carries out the reaction IMP + L-aspartate + GTP = N(6)-(1,2-dicarboxyethyl)-AMP + GDP + phosphate + 2 H(+). The protein operates within purine metabolism; AMP biosynthesis via de novo pathway; AMP from IMP: step 1/2. Its function is as follows. Plays an important role in the de novo pathway of purine nucleotide biosynthesis. Catalyzes the first committed step in the biosynthesis of AMP from IMP. The protein is Adenylosuccinate synthetase of Anaplasma marginale (strain St. Maries).